Here is a 343-residue protein sequence, read N- to C-terminus: Dihydroorotate dehydrogenase (quinone) (343 aa).

FMN contacts are provided by residues 58-62 (AGYDK) and serine 82. Position 62 (lysine 62) interacts with substrate. 107–111 (NRMGF) contacts substrate. The FMN site is built by asparagine 136 and asparagine 167. Residue asparagine 167 participates in substrate binding. The Nucleophile role is filled by serine 170. Asparagine 172 serves as a coordination point for substrate. FMN-binding residues include lysine 206 and serine 234. 235–236 (NT) contacts substrate. FMN is bound by residues glycine 256, glycine 285, and 306-307 (YS).

Belongs to the dihydroorotate dehydrogenase family. Type 2 subfamily. As to quaternary structure, monomer. The cofactor is FMN.

Its subcellular location is the cell membrane. It carries out the reaction (S)-dihydroorotate + a quinone = orotate + a quinol. Its pathway is pyrimidine metabolism; UMP biosynthesis via de novo pathway; orotate from (S)-dihydroorotate (quinone route): step 1/1. Its function is as follows. Catalyzes the conversion of dihydroorotate to orotate with quinone as electron acceptor. The chain is Dihydroorotate dehydrogenase (quinone) from Erythrobacter litoralis (strain HTCC2594).